The primary structure comprises 106 residues: MIVTTTAHIEGREIASYLDIVSAESVHGINVVRDLFAGMRDFFGGRSQTLERALKEARIQATNEIKERARQCNADAVVGVDFEISMPAGRGGMVVVFATGTAVRLK.

This sequence belongs to the UPF0145 family.

The chain is UPF0145 protein PFL_3418 from Pseudomonas fluorescens (strain ATCC BAA-477 / NRRL B-23932 / Pf-5).